A 69-amino-acid polypeptide reads, in one-letter code: Parvalbumin beta 3 (69 aa).

A1 bears the N-acetylalanine mark. The 36-residue stretch at 24-59 folds into the EF-hand domain; it reads FNYKTFFKFFAIIDQDHSGFIEEEELKLFLQTFSAG. Ca(2+) is bound by residues D37, D39, S41, F43, E45, and E48.

The protein belongs to the parvalbumin family.

Its function is as follows. In muscle, parvalbumin is thought to be involved in relaxation after contraction. It binds two calcium ions. This chain is Parvalbumin beta 3, found in Merluccius polli (Benguela hake).